Here is a 1422-residue protein sequence, read N- to C-terminus: FH1/FH2 domain-containing protein 3 (1422 aa).

A GBD/FH3 domain is found at 18-411 (NSTNFPEPSR…NFGNNSYHSS (394 aa)). Disordered stretches follow at residues 323–464 (RHED…RRRQ), 521–666 (ACLA…GVNG), 687–708 (RKSPDDEEKGDGEAGRTQQEAE), 754–781 (SGDLGRGSISPDAEPNDKVPETAPVQPK), 821–849 (LGHREAPGPPPPPPPTFLGLPPPPPPPLL), 1262–1305 (QQKQ…SYAE), 1320–1357 (SSPSVEDATPALGVRTRSRASRGSTSSWTMGTDDSPNV), and 1374–1410 (TQVPSQRVVPRERKRSRANRKSLRRTLKSGLTPEEAR). S345 carries the phosphoserine modification. Positions 357–366 (LDRRRSRRHS) are enriched in basic residues. The span at 367 to 390 (VQSIKSTLSAPTSPCSQSAPSFKP) shows a compositional bias: polar residues. S375 bears the Phosphoserine mark. The segment covering 410–430 (SSRPSSGSSVPTTPTSSVSPP) has biased composition (low complexity). Over residues 438-449 (SSPSGLLTSSFR) the composition is skewed to polar residues. Positions 448-480 (FRQHQESLAAERERRRQEREERLQRIEREERNK) form a coiled coil. The segment covering 450 to 464 (QHQESLAAERERRRQ) has biased composition (basic and acidic residues). The span at 521-535 (ACLAPLSHSPSSSDS) shows a compositional bias: low complexity. A compositionally biased stretch (polar residues) spans 536-547 (QEALTVSASSPG). Composition is skewed to acidic residues over residues 559–569 (PEPESEAEPEA) and 592–603 (ETEVEQALEQEP). Positions 604–624 (EERASLSEKERQNEGVNERDN) are enriched in basic and acidic residues. Low complexity predominate over residues 626-635 (SASSVSSSSS). The segment covering 637 to 651 (LEREEKEDKLSRDRT) has biased composition (basic and acidic residues). At S763 the chain carries Phosphoserine. Phosphothreonine is present on T775. Over residues 827–849 (PGPPPPPPPTFLGLPPPPPPPLL) the composition is skewed to pro residues. The 32-residue stretch at 827 to 858 (PGPPPPPPPTFLGLPPPPPPPLLDSIPPPPVP) folds into the FH1 domain. The FH2 domain occupies 883–1279 (GQPTFTKKKK…HRERNKTRGK (397 aa)). Basic residues predominate over residues 1264 to 1278 (KQKRANHRERNKTRG). The region spanning 1359–1391 (DDAADEIMDRIVKSATQVPSQRVVPRERKRSRA) is the DAD domain. Over residues 1385–1400 (ERKRSRANRKSLRRTL) the composition is skewed to basic residues.

Belongs to the formin homology family. Interacts with nestin/NES-based interfilament (IF). Interacts with SQSTM1; isoform 4 threonine phosphorylation disrupts SQSTM1-binding. Phosphorylated on Thr-1474 and Thr-1476 by CK2. Expressed in the heart, kidney and brain. May be down-regulated in various types of heart diseases, including idiopathic dilated, ventricular dilated, familial dilated and perinatal dilated cardiomyopathies, as well as ischemic heart disease (at protein level).

The protein resides in the cytoplasm. It localises to the cytoskeleton. Its subcellular location is the myofibril. It is found in the sarcomere. The protein localises to the z line. Its function is as follows. Actin-organizing protein that may cause stress fiber formation together with cell elongation. Isoform 4 may play a role in actin filament polymerization in cardiomyocytes. This is FH1/FH2 domain-containing protein 3 (FHOD3) from Homo sapiens (Human).